A 275-amino-acid chain; its full sequence is Lacto-N-neotetraose biosynthesis glycosyltransferase LgtB (275 aa).

This sequence belongs to the glycosyltransferase 25 family.

It functions in the pathway glycan metabolism; lacto-N-neotetraose biosynthesis. Its pathway is bacterial outer membrane biogenesis; lipooligosaccharide biosynthesis. Its function is as follows. Adds the second galactose to the lacto-N-tetraose chain in lipooligosaccharide (LOS). The protein is Lacto-N-neotetraose biosynthesis glycosyltransferase LgtB (lgtB) of Neisseria meningitidis serogroup B (strain ATCC BAA-335 / MC58).